Consider the following 574-residue polypeptide: Kelch-like protein 18 (574 aa).

The 40-residue stretch at 66–105 (MFTNDMMECKQDEIVMQGMDPSALEALINFAYNGNLAIDQ) folds into the BTB domain. Residues 140–242 (CLGVRQFAET…RPQFLSDRVQ (103 aa)) form the BACK domain. Kelch repeat units follow at residues 289-336 (LIYA…VVNG), 337-383 (LLYA…VLDG), 384-430 (QIYV…VFEG), 432-477 (IYVS…SLGS), 479-524 (MFVC…ASCG), and 525-571 (RLYA…CIPL).

In terms of assembly, interacts with AURKA. Interacts (via BTB domain) with CUL3. Interacts (via kelch repeats) with UNC119.

Its pathway is protein modification; protein ubiquitination. In terms of biological role, substrate-specific adapter of a BCR (BTB-CUL3-RBX1) E3 ubiquitin-protein ligase complex required for mitotic progression and cytokinesis. The BCR(KLHL18) E3 ubiquitin ligase complex mediates the ubiquitination of AURKA leading to its activation at the centrosome which is required for initiating mitotic entry. Regulates light-and dark-dependent alpha-transducin localization changes in rod photoreceptors through UNC119 ubiquitination and degradation. Preferentially ubiquitinates the unphosphorylated form of UNC119 over the phosphorylated form. In the presence of UNC119, under dark-adapted conditions alpha-transducin mislocalizes from the outer segment to the inner part of rod photoreceptors which leads to decreased photoreceptor damage caused by light. This is Kelch-like protein 18 (KLHL18) from Homo sapiens (Human).